The chain runs to 817 residues: Collagen-like protein 4 (817 aa).

Collagen-like domains are found at residues 83–142 (GDTG…KGQD), 145–264 (GSKG…KGDD), and 268–327 (GIQG…KGLK). Disordered regions lie at residues 87–107 (NKGE…GDNG), 120–458 (FNGS…DKGD), and 479–543 (IIGD…KGDI). N-linked (GlcNAc...) asparagine; by host glycans are attached at residues Asn-106 and Asn-121. 2 stretches are compositionally biased toward basic and acidic residues: residues 126–141 (IKGD…DKGQ) and 149–161 (QKGE…DDGI). N-linked (GlcNAc...) asparagine; by host glycosylation is present at Asn-183. Basic and acidic residues-rich tracts occupy residues 212-224 (IKGD…EDGI) and 233-245 (SKGE…DDGT). Low complexity predominate over residues 246–260 (KGITGLKGTKGNSGS). Residues 294–341 (KGSDGDKGNKGLDGIKGDLGDDGIKGDKGIKGLKGDTGNSDKGDKGSK) are compositionally biased toward basic and acidic residues. 2 N-linked (GlcNAc...) asparagine; by host glycosylation sites follow: Asn-345 and Asn-360. 2 Collagen-like domains span residues 352 to 411 (GDKG…KGLV) and 430 to 489 (GDKG…KGIK). 3 stretches are compositionally biased toward basic and acidic residues: residues 354 to 368 (KGSK…ESGD), 377 to 390 (SKGD…KGDL), and 428 to 458 (SKGD…DKGD). Residues 480–494 (IGDNGSKGIKGSSNN) show a composition bias toward low complexity. Asn-483 is a glycosylation site (N-linked (GlcNAc...) asparagine; by host). 3 stretches are compositionally biased toward basic and acidic residues: residues 495–504 (KGDKGDKGNT), 515–525 (IKGDKGIKGSK), and 533–543 (EKGEKGTKGDI). One can recognise a Collagen-like 6 domain in the interval 512–570 (TKGIKGDKGIKGSKGDLGSVGEKGEKGTKGDIGTKGETGLKGIIGDKGELGSKGIKGLS). N-linked (GlcNAc...) asparagine; by host glycosylation is found at Asn-709, Asn-712, and Asn-715. Over residues 757 to 771 (GGGGASAFGNGGRGG) the composition is skewed to gly residues. A disordered region spans residues 757 to 804 (GGGGASAFGNGGRGGNTTQAATKGEYGSGGGGGSEFSPSGSTNGGDGG). Asn-772 carries an N-linked (GlcNAc...) asparagine; by host glycan.

Post-translationally, may be hydroxylated on lysine by the viral-encoded procollagen-lysine,2-oxoglutarate 5-dioxygenase.

The protein resides in the virion. May participate in the formation of a layer of cross-linked glycosylated fibrils at the viral surface thus giving it a hairy-like appearance. The chain is Collagen-like protein 4 from Acanthamoeba polyphaga (Amoeba).